A 463-amino-acid chain; its full sequence is Succinate--CoA ligase [ADP-forming] subunit beta, mitochondrial (463 aa).

The N-terminal 53 residues, 1 to 53 (MAASMFYGRQLAAAALRSHRPQTTLRAAAQVLGNSGLFNKHGLQVQQQQQRTL), are a transit peptide targeting the mitochondrion. Residues 61–288 (MELLQEAGVS…SNSAYRQKKI (228 aa)) form the ATP-grasp domain. Position 78 is an N6-acetyllysine (K78). The residue at position 84 (Y84) is a Phosphotyrosine. Position 88 is an N6-acetyllysine; alternate (K88). Residue K88 is modified to N6-succinyllysine; alternate. Residues K98 and 105-107 (GRG) contribute to the ATP site. Residues K129, K139, K143, and K216 each carry the N6-acetyllysine modification. Residues N258 and D272 each coordinate Mg(2+). The residue at position 279 (S279) is a Phosphoserine. N323 serves as a coordination point for substrate. T341 bears the Phosphothreonine mark. An N6-acetyllysine modification is found at K368. Residue 380 to 382 (GIM) participates in substrate binding. K438 bears the N6-acetyllysine mark.

This sequence belongs to the succinate/malate CoA ligase beta subunit family. ATP-specific subunit beta subfamily. Heterodimer of an alpha and a beta subunit. The beta subunit determines specificity for ATP. Interacts with ALAS2. Requires Mg(2+) as cofactor.

The protein localises to the mitochondrion. It carries out the reaction succinate + ATP + CoA = succinyl-CoA + ADP + phosphate. It functions in the pathway carbohydrate metabolism; tricarboxylic acid cycle; succinate from succinyl-CoA (ligase route): step 1/1. ATP-specific succinyl-CoA synthetase functions in the citric acid cycle (TCA), coupling the hydrolysis of succinyl-CoA to the synthesis of ATP and thus represents the only step of substrate-level phosphorylation in the TCA. The beta subunit provides nucleotide specificity of the enzyme and binds the substrate succinate, while the binding sites for coenzyme A and phosphate are found in the alpha subunit. This chain is Succinate--CoA ligase [ADP-forming] subunit beta, mitochondrial, found in Mus musculus (Mouse).